The sequence spans 460 residues: Bifunctional protein GlmU (460 aa).

The segment at 1-232 (MENVAAIILA…SDEIMGVNDR (232 aa)) is pyrophosphorylase. Residues 9-12 (LAAG), lysine 23, glutamine 75, and 80-81 (GT) each bind UDP-N-acetyl-alpha-D-glucosamine. Position 105 (aspartate 105) interacts with Mg(2+). The UDP-N-acetyl-alpha-D-glucosamine site is built by glycine 142, glutamate 157, asparagine 172, and asparagine 230. Position 230 (asparagine 230) interacts with Mg(2+). The linker stretch occupies residues 233 to 253 (AQLAQAARILRRRINRDLMLS). An N-acetyltransferase region spans residues 254 to 460 (GVSLVDPEQT…GWRIRMKKKT (207 aa)). UDP-N-acetyl-alpha-D-glucosamine is bound by residues arginine 336 and lysine 354. Catalysis depends on histidine 366, which acts as the Proton acceptor. UDP-N-acetyl-alpha-D-glucosamine is bound by residues tyrosine 369 and asparagine 380. Acetyl-CoA-binding positions include 389-390 (NY), serine 408, alanine 426, and arginine 443.

In the N-terminal section; belongs to the N-acetylglucosamine-1-phosphate uridyltransferase family. This sequence in the C-terminal section; belongs to the transferase hexapeptide repeat family. Homotrimer. It depends on Mg(2+) as a cofactor.

Its subcellular location is the cytoplasm. The catalysed reaction is alpha-D-glucosamine 1-phosphate + acetyl-CoA = N-acetyl-alpha-D-glucosamine 1-phosphate + CoA + H(+). The enzyme catalyses N-acetyl-alpha-D-glucosamine 1-phosphate + UTP + H(+) = UDP-N-acetyl-alpha-D-glucosamine + diphosphate. Its pathway is nucleotide-sugar biosynthesis; UDP-N-acetyl-alpha-D-glucosamine biosynthesis; N-acetyl-alpha-D-glucosamine 1-phosphate from alpha-D-glucosamine 6-phosphate (route II): step 2/2. It functions in the pathway nucleotide-sugar biosynthesis; UDP-N-acetyl-alpha-D-glucosamine biosynthesis; UDP-N-acetyl-alpha-D-glucosamine from N-acetyl-alpha-D-glucosamine 1-phosphate: step 1/1. It participates in bacterial outer membrane biogenesis; LPS lipid A biosynthesis. In terms of biological role, catalyzes the last two sequential reactions in the de novo biosynthetic pathway for UDP-N-acetylglucosamine (UDP-GlcNAc). The C-terminal domain catalyzes the transfer of acetyl group from acetyl coenzyme A to glucosamine-1-phosphate (GlcN-1-P) to produce N-acetylglucosamine-1-phosphate (GlcNAc-1-P), which is converted into UDP-GlcNAc by the transfer of uridine 5-monophosphate (from uridine 5-triphosphate), a reaction catalyzed by the N-terminal domain. The polypeptide is Bifunctional protein GlmU (Pelobacter propionicus (strain DSM 2379 / NBRC 103807 / OttBd1)).